The following is a 190-amino-acid chain: NADH-ubiquinone oxidoreductase 75 kDa subunit, mitochondrial (190 aa).

This sequence belongs to the complex I 75 kDa subunit family. As to quaternary structure, core subunit of respiratory chain NADH dehydrogenase (Complex I) which is composed of 45 different subunits. This is the largest subunit of complex I and it is a component of the iron-sulfur (IP) fragment of the enzyme. Complex I associates with ubiquinol-cytochrome reductase complex (Complex III) to form supercomplexes. Interacts with MDM2 and AKAP1. The cofactor is [2Fe-2S] cluster. Requires [4Fe-4S] cluster as cofactor.

It localises to the mitochondrion inner membrane. It carries out the reaction a ubiquinone + NADH + 5 H(+)(in) = a ubiquinol + NAD(+) + 4 H(+)(out). In terms of biological role, core subunit of the mitochondrial membrane respiratory chain NADH dehydrogenase (Complex I) which catalyzes electron transfer from NADH through the respiratory chain, using ubiquinone as an electron acceptor. Essential for catalysing the entry and efficient transfer of electrons within complex I. Plays a key role in the assembly and stability of complex I and participates in the association of complex I with ubiquinol-cytochrome reductase complex (Complex III) to form supercomplexes. The polypeptide is NADH-ubiquinone oxidoreductase 75 kDa subunit, mitochondrial (Mesocricetus auratus (Golden hamster)).